Consider the following 312-residue polypeptide: Porphobilinogen deaminase (312 aa).

Position 241 is an S-(dipyrrolylmethanemethyl)cysteine (cysteine 241).

The protein belongs to the HMBS family. As to quaternary structure, monomer. Requires dipyrromethane as cofactor.

The catalysed reaction is 4 porphobilinogen + H2O = hydroxymethylbilane + 4 NH4(+). It functions in the pathway porphyrin-containing compound metabolism; protoporphyrin-IX biosynthesis; coproporphyrinogen-III from 5-aminolevulinate: step 2/4. It participates in porphyrin-containing compound metabolism; chlorophyll biosynthesis. Tetrapolymerization of the monopyrrole PBG into the hydroxymethylbilane pre-uroporphyrinogen in several discrete steps. The polypeptide is Porphobilinogen deaminase (Chlorobaculum tepidum (strain ATCC 49652 / DSM 12025 / NBRC 103806 / TLS) (Chlorobium tepidum)).